We begin with the raw amino-acid sequence, 135 residues long: DFNCLPGWSAYDQHCYQAFNEPKTWDEAERFCTEQAKRGHLVSIGSDGEADFVAQLVTNNIKRPELYVWIGLRDRRKEQQCSSEWSMSASIIYVNWNTGESQMCQGLARWTGFRKWDYSDCQAKNPFVCKFPSEC.

Cystine bridges form between C4/C15, C32/C129, and C104/C121. One can recognise a C-type lectin domain in the interval 11 to 130 (YDQHCYQAFN…CQAKNPFVCK (120 aa)).

It belongs to the snaclec family. In terms of assembly, heterotetramer of subunit alpha, beta, gamma and delta; only the gamma and the delta subunits are disulfide-linked. Alpha-beta heterodimer and gamma-delta heterodimer associate orthogonally, giving a cruciform conformation. This heterotetramer may covalently dimerizes thanks to the gamma subunit. In terms of tissue distribution, expressed by the venom gland.

The protein resides in the secreted. Functionally, potent inhibitor of collagen-induced platelet aggregation. It acts by binding to the integrin alpha2A domain and blocks collagen binding to integrin alpha-2/beta-1 (ITGA2/ITGB1). The gamma/delta subunits mainly contribute to this activity. The polypeptide is Snaclec rhodocetin subunit gamma (Calloselasma rhodostoma (Malayan pit viper)).